Reading from the N-terminus, the 260-residue chain is Global transcriptional regulator CodY (260 aa).

Residues 1-159 (MPNLLEKTRK…SSTVVGIQLL (159 aa)) are GAF domain. The H-T-H motif DNA-binding region spans 207-226 (ASVIADRIGITRSVIVNALR).

It belongs to the CodY family.

It localises to the cytoplasm. Its function is as follows. DNA-binding global transcriptional regulator which is involved in the adaptive response to starvation and acts by directly or indirectly controlling the expression of numerous genes in response to nutrient availability. During rapid exponential growth, CodY is highly active and represses genes whose products allow adaptation to nutrient depletion. The polypeptide is Global transcriptional regulator CodY (Streptococcus pyogenes serotype M4 (strain MGAS10750)).